A 154-amino-acid chain; its full sequence is Myoglobin (154 aa).

The Globin domain maps to 2–148; the sequence is GLSDGEWQIV…FRNDIAAKYK (147 aa). S4 bears the Phosphoserine mark. Residue H65 participates in nitrite binding. An O2-binding site is contributed by H65. The residue at position 68 (T68) is a Phosphothreonine. Residue H94 coordinates heme b.

The protein belongs to the globin family. In terms of assembly, monomeric.

It localises to the cytoplasm. It is found in the sarcoplasm. It catalyses the reaction Fe(III)-heme b-[protein] + nitric oxide + H2O = Fe(II)-heme b-[protein] + nitrite + 2 H(+). The catalysed reaction is H2O2 + AH2 = A + 2 H2O. Its function is as follows. Monomeric heme protein which primary function is to store oxygen and facilitate its diffusion within muscle tissues. Reversibly binds oxygen through a pentacoordinated heme iron and enables its timely and efficient release as needed during periods of heightened demand. Depending on the oxidative conditions of tissues and cells, and in addition to its ability to bind oxygen, it also has a nitrite reductase activity whereby it regulates the production of bioactive nitric oxide. Under stress conditions, like hypoxia and anoxia, it also protects cells against reactive oxygen species thanks to its pseudoperoxidase activity. The protein is Myoglobin (MB) of Lycaon pictus (African wild dog).